The sequence spans 466 residues: Histidine--tRNA ligase (466 aa).

It belongs to the class-II aminoacyl-tRNA synthetase family. As to quaternary structure, homodimer.

It localises to the cytoplasm. It carries out the reaction tRNA(His) + L-histidine + ATP = L-histidyl-tRNA(His) + AMP + diphosphate + H(+). In Bifidobacterium animalis subsp. lactis (strain AD011), this protein is Histidine--tRNA ligase.